Reading from the N-terminus, the 432-residue chain is Glutamate-1-semialdehyde 2,1-aminomutase (432 aa).

An N6-(pyridoxal phosphate)lysine modification is found at lysine 269.

It belongs to the class-III pyridoxal-phosphate-dependent aminotransferase family. HemL subfamily. As to quaternary structure, homodimer. Requires pyridoxal 5'-phosphate as cofactor.

The protein resides in the cytoplasm. The catalysed reaction is (S)-4-amino-5-oxopentanoate = 5-aminolevulinate. The protein operates within porphyrin-containing compound metabolism; protoporphyrin-IX biosynthesis; 5-aminolevulinate from L-glutamyl-tRNA(Glu): step 2/2. The polypeptide is Glutamate-1-semialdehyde 2,1-aminomutase (Desulforudis audaxviator (strain MP104C)).